The chain runs to 156 residues: Lipoprotein signal peptidase (156 aa).

Helical transmembrane passes span 8–28, 39–59, 67–87, and 99–119; these read IYIN…KWIL, VFFI…SILS, YFLL…MIKF, and SLIL…GFVI. Catalysis depends on residues D120 and D138. A helical transmembrane segment spans residues 129 to 149; that stretch reads WHFATFNIADFSIFIGMIMII.

It belongs to the peptidase A8 family.

The protein localises to the cell inner membrane. The catalysed reaction is Release of signal peptides from bacterial membrane prolipoproteins. Hydrolyzes -Xaa-Yaa-Zaa-|-(S,diacylglyceryl)Cys-, in which Xaa is hydrophobic (preferably Leu), and Yaa (Ala or Ser) and Zaa (Gly or Ala) have small, neutral side chains.. It participates in protein modification; lipoprotein biosynthesis (signal peptide cleavage). In terms of biological role, this protein specifically catalyzes the removal of signal peptides from prolipoproteins. In Buchnera aphidicola subsp. Schizaphis graminum (strain Sg), this protein is Lipoprotein signal peptidase.